Here is a 503-residue protein sequence, read N- to C-terminus: Sugar phosphate exchanger 3 (503 aa).

The helical transmembrane segment at 20 to 40 threads the bilayer; the sequence is YTHHHLAAFLLTFFSYSLLHA. N-linked (GlcNAc...) asparagine glycans are attached at residues Asn62 and Asn71. Helical transmembrane passes span 87-107, 119-139, 152-172, 183-203, and 214-234; these read TLFL…GLFI, LVLT…GTLT, LVWI…VAIM, FVFG…AFLA, and AFLV…FGLV. Asn275 carries an N-linked (GlcNAc...) asparagine glycan. 6 helical membrane-spanning segments follow: residues 300–322, 342–362, 367–387, 395–415, 437–457, and 466–486; these read GVLL…FFWL, IWYD…SDLM, PVLT…SHSP, FIMS…SSAI, GIVD…VPLI, and VFYF…PLIV.

This sequence belongs to the major facilitator superfamily. Organophosphate:Pi antiporter (OPA) (TC 2.A.1.4) family.

It is found in the endoplasmic reticulum membrane. Its subcellular location is the lysosome membrane. In terms of biological role, unlike the other SLC37 members, seems to lack glucose-6-phosphate antiporter activity. This is Sugar phosphate exchanger 3 (slc37a3) from Xenopus laevis (African clawed frog).